A 481-amino-acid polypeptide reads, in one-letter code: RuvB-like helicase 2 (481 aa).

73–80 (GEPSTGKT) contributes to the ATP binding site. The tract at residues 453–481 (EEVERDPAAGGGAKRRVEGGGGDAQPMEH) is disordered.

Belongs to the RuvB family. In terms of assembly, forms homohexameric rings. May form a dodecamer with rept made of two stacked hexameric rings. Component of the chromatin remodeling Ino80 complex. Interacts with Myc and pont. As to expression, higher expression occurs in primordia of mesoderm, anterior and posterior midgut and cephalic furrow early in gastrulation, as well as in endoderm and mesoderm lineages during germ band extension. Later in development expression is only maintained in endoderm cells. Expressed in thoracic and abdominal segment neural precursors of all embryonic chordotonal organs.

It localises to the nucleus. It catalyses the reaction ATP + H2O = ADP + phosphate + H(+). Acts as a transcriptional coactivator in Wg signaling caused by altered arm signaling. Pont and rept interfere antagonistically with nuclear arm signaling function, and are required to enhance or reduce arm activity, respectively. Also an essential cofactor for the normal function of Myc; required for cellular proliferation and growth. Its function is as follows. Proposed core component of the chromatin remodeling Ino80 complex which is involved in transcriptional regulation, DNA replication and probably DNA repair. This chain is RuvB-like helicase 2, found in Drosophila melanogaster (Fruit fly).